We begin with the raw amino-acid sequence, 159 residues long: NAD(P)H-quinone oxidoreductase subunit J, chloroplastic (159 aa).

This sequence belongs to the complex I 30 kDa subunit family. In terms of assembly, NDH is composed of at least 16 different subunits, 5 of which are encoded in the nucleus.

The protein localises to the plastid. Its subcellular location is the chloroplast thylakoid membrane. It catalyses the reaction a plastoquinone + NADH + (n+1) H(+)(in) = a plastoquinol + NAD(+) + n H(+)(out). It carries out the reaction a plastoquinone + NADPH + (n+1) H(+)(in) = a plastoquinol + NADP(+) + n H(+)(out). NDH shuttles electrons from NAD(P)H:plastoquinone, via FMN and iron-sulfur (Fe-S) centers, to quinones in the photosynthetic chain and possibly in a chloroplast respiratory chain. The immediate electron acceptor for the enzyme in this species is believed to be plastoquinone. Couples the redox reaction to proton translocation, and thus conserves the redox energy in a proton gradient. This Triticum aestivum (Wheat) protein is NAD(P)H-quinone oxidoreductase subunit J, chloroplastic.